The following is a 476-amino-acid chain: Ribulose bisphosphate carboxylase large chain (476 aa).

Residues 1-2 (MS) constitute a propeptide that is removed on maturation. P3 carries the post-translational modification N-acetylproline. N6,N6,N6-trimethyllysine is present on K14. Residues N123 and T173 each coordinate substrate. The active-site Proton acceptor is K175. K177 provides a ligand contact to substrate. Mg(2+) is bound by residues K201, D203, and E204. An N6-carboxylysine modification is found at K201. The Proton acceptor role is filled by H294. Residues R295, H327, and S379 each contribute to the substrate site.

The protein belongs to the RuBisCO large chain family. Type I subfamily. Heterohexadecamer of 8 large chains and 8 small chains; disulfide-linked. The disulfide link is formed within the large subunit homodimers. Requires Mg(2+) as cofactor. The disulfide bond which can form in the large chain dimeric partners within the hexadecamer appears to be associated with oxidative stress and protein turnover.

It is found in the plastid. Its subcellular location is the chloroplast. It carries out the reaction 2 (2R)-3-phosphoglycerate + 2 H(+) = D-ribulose 1,5-bisphosphate + CO2 + H2O. The enzyme catalyses D-ribulose 1,5-bisphosphate + O2 = 2-phosphoglycolate + (2R)-3-phosphoglycerate + 2 H(+). Functionally, ruBisCO catalyzes two reactions: the carboxylation of D-ribulose 1,5-bisphosphate, the primary event in carbon dioxide fixation, as well as the oxidative fragmentation of the pentose substrate in the photorespiration process. Both reactions occur simultaneously and in competition at the same active site. The polypeptide is Ribulose bisphosphate carboxylase large chain (Zea mays (Maize)).